The primary structure comprises 264 residues: Thymidylate synthase (264 aa).

Position 21 (arginine 21) interacts with dUMP. Residue histidine 51 coordinates (6R)-5,10-methylene-5,6,7,8-tetrahydrofolate. 126-127 (RR) contributes to the dUMP binding site. Cysteine 146 serves as the catalytic Nucleophile. Residues 166-169 (RSAD), asparagine 177, and 207-209 (HLY) contribute to the dUMP site. Aspartate 169 contacts (6R)-5,10-methylene-5,6,7,8-tetrahydrofolate. Alanine 263 contributes to the (6R)-5,10-methylene-5,6,7,8-tetrahydrofolate binding site.

This sequence belongs to the thymidylate synthase family. Bacterial-type ThyA subfamily. As to quaternary structure, homodimer.

The protein localises to the cytoplasm. The enzyme catalyses dUMP + (6R)-5,10-methylene-5,6,7,8-tetrahydrofolate = 7,8-dihydrofolate + dTMP. The protein operates within pyrimidine metabolism; dTTP biosynthesis. In terms of biological role, catalyzes the reductive methylation of 2'-deoxyuridine-5'-monophosphate (dUMP) to 2'-deoxythymidine-5'-monophosphate (dTMP) while utilizing 5,10-methylenetetrahydrofolate (mTHF) as the methyl donor and reductant in the reaction, yielding dihydrofolate (DHF) as a by-product. This enzymatic reaction provides an intracellular de novo source of dTMP, an essential precursor for DNA biosynthesis. The chain is Thymidylate synthase from Ralstonia nicotianae (strain ATCC BAA-1114 / GMI1000) (Ralstonia solanacearum).